A 524-amino-acid polypeptide reads, in one-letter code: Solute carrier family 2, facilitated glucose transporter member 2 (524 aa).

At 1 to 6 (MTEDKI) the chain is on the cytoplasmic side. The helical transmembrane segment at 7–26 (TGTLVFAVLTAVLGSFQFGY) threads the bilayer. The Extracellular portion of the chain corresponds to 27–89 (DIGVINAPQQ…SWAEEETTAS (63 aa)). N-linked (GlcNAc...) asparagine glycosylation is present at Asn62. Residues 90–115 (ASLIIMLWSLSVSIFAIGGMIASFFG) form a helical membrane-spanning segment. The Cytoplasmic portion of the chain corresponds to 116–126 (GMLGDRLGRIK). The chain crosses the membrane as a helical span at residues 127–145 (AMLVANILSLVGALLMWFS). The Extracellular segment spans residues 146-150 (KLGPS). Residues 151–176 (HILIISGRGISGLYCGLISGLVPMYI) form a helical membrane-spanning segment. At 177-187 (GEIAPTKFRGA) the chain is on the cytoplasmic side. A helical membrane pass occupies residues 188–211 (IGALHQLAIVTGILVSQIIGLDFL). A D-glucose-binding site is contributed by Gln193. The Extracellular portion of the chain corresponds to 212–216 (LGNHE). A helical transmembrane segment spans residues 217 to 239 (LWHILLGLSAVPAVLQSLMLFFC). Residues 240 to 303 (PESPRYLYIK…LFTNSSYRQP (64 aa)) are Cytoplasmic-facing. A helical membrane pass occupies residues 304–327 (ILVALMLHMAQQFSGINGIFYYST). D-glucose contacts are provided by residues 314 to 315 (QQ) and Asn320. Over 328–338 (SIFQTAGISQP) the chain is Extracellular. Residues 339 to 360 (VYATIGVGAINTIFTALSVFLV) traverse the membrane as a helical segment. Position 349 (Asn349) interacts with D-glucose. Topologically, residues 361–366 (EKAGRR) are cytoplasmic. Residues 367 to 389 (SLFLIGMSGMFVCAIFMSVGLVL) traverse the membrane as a helical segment. Residues 390 to 394 (LDKLP) lie on the Extracellular side of the membrane. The chain crosses the membrane as a helical span at residues 395–413 (WMSYVSMTAIFLFVSFFEI). 2 residues coordinate D-glucose: Glu412 and Trp420. Topologically, residues 414-433 (GPGPIPWFMVAEFFSQGPRP) are cytoplasmic. Residues 434–458 (AALAMAAFSNWTCNFIIALCFQYIA) traverse the membrane as a helical segment. At 459-463 (DFCGP) the chain is on the extracellular side. A helical membrane pass occupies residues 464 to 482 (YVFFLFAGVVLVFTLFTFF). The Cytoplasmic segment spans residues 483-524 (KVPETKGKSFEEIAAEFQKKSGSAQSPKAAVEMEFLGATETV). A Phosphothreonine modification is found at Thr523.

Belongs to the major facilitator superfamily. Sugar transporter (TC 2.A.1.1) family. Glucose transporter subfamily. N-glycosylated; required for stability and retention at the cell surface of pancreatic beta cells.

It localises to the cell membrane. It carries out the reaction D-glucose(out) = D-glucose(in). The catalysed reaction is D-fructose(out) = D-fructose(in). The enzyme catalyses L-dehydroascorbate(out) = L-dehydroascorbate(in). It catalyses the reaction D-galactose(in) = D-galactose(out). With respect to regulation, D-glucose and maltose competitively inhibit fructose transport. D-glucose, D-fructose and maltose inhibit deoxyglucose transport. Its function is as follows. Facilitative hexose transporter that mediates the transport of glucose, fructose and galactose. Likely mediates the bidirectional transfer of glucose across the plasma membrane of hepatocytes and is responsible for uptake of glucose by the beta cells; may comprise part of the glucose-sensing mechanism of the beta cell. May also participate with the Na(+)/glucose cotransporter in the transcellular transport of glucose in the small intestine and kidney. Also able to mediate the transport of dehydroascorbate. In Sus scrofa (Pig), this protein is Solute carrier family 2, facilitated glucose transporter member 2.